The chain runs to 379 residues: Queuine tRNA-ribosyltransferase (379 aa).

The active-site Proton acceptor is aspartate 89. Substrate is bound by residues 89 to 93, aspartate 143, glutamine 187, and glycine 214; that span reads DSGGF. Residues 245–251 form an RNA binding region; that stretch reads GVGKPED. Aspartate 264 serves as the catalytic Nucleophile. Residues 269–273 form an RNA binding; important for wobble base 34 recognition region; the sequence is TRNAR. 4 residues coordinate Zn(2+): cysteine 302, cysteine 304, cysteine 307, and histidine 333.

Belongs to the queuine tRNA-ribosyltransferase family. As to quaternary structure, homodimer. Within each dimer, one monomer is responsible for RNA recognition and catalysis, while the other monomer binds to the replacement base PreQ1. Zn(2+) serves as cofactor.

It carries out the reaction 7-aminomethyl-7-carbaguanine + guanosine(34) in tRNA = 7-aminomethyl-7-carbaguanosine(34) in tRNA + guanine. Its pathway is tRNA modification; tRNA-queuosine biosynthesis. Catalyzes the base-exchange of a guanine (G) residue with the queuine precursor 7-aminomethyl-7-deazaguanine (PreQ1) at position 34 (anticodon wobble position) in tRNAs with GU(N) anticodons (tRNA-Asp, -Asn, -His and -Tyr). Catalysis occurs through a double-displacement mechanism. The nucleophile active site attacks the C1' of nucleotide 34 to detach the guanine base from the RNA, forming a covalent enzyme-RNA intermediate. The proton acceptor active site deprotonates the incoming PreQ1, allowing a nucleophilic attack on the C1' of the ribose to form the product. After dissociation, two additional enzymatic reactions on the tRNA convert PreQ1 to queuine (Q), resulting in the hypermodified nucleoside queuosine (7-(((4,5-cis-dihydroxy-2-cyclopenten-1-yl)amino)methyl)-7-deazaguanosine). The chain is Queuine tRNA-ribosyltransferase from Edwardsiella ictaluri (strain 93-146).